A 410-amino-acid polypeptide reads, in one-letter code: Glycylpeptide N-tetradecanoyltransferase (410 aa).

10 residues coordinate tetradecanoyl-CoA: Phe-30, Trp-31, Phe-162, Leu-163, Cys-164, Val-165, Ser-171, Arg-173, Leu-174, and Ala-175.

Belongs to the NMT family. In terms of assembly, heterodimer composed of NMT and AK2; AK2 myristoylation stabilizes the complex.

It localises to the cytoplasm. It carries out the reaction N-terminal glycyl-[protein] + tetradecanoyl-CoA = N-tetradecanoylglycyl-[protein] + CoA + H(+). Adds a myristoyl group to the N-terminal glycine residue of certain cellular proteins. Myristoylates adenylate kinase AK2. During the asexual blood stage, may myristoylate proteins such as ARO, CDPK1 and GAP45. Probably by mediating protein myristoylation, plays a role in the assembly of the inner membrane complex during the early stages of schizogony and in the formation of rhoptries in the late stages and thus merozoite egress. The chain is Glycylpeptide N-tetradecanoyltransferase from Plasmodium falciparum (isolate 3D7).